Here is a 338-residue protein sequence, read N- to C-terminus: MSPAGKLPSEAERILVRKSGAWTNPSYGSYPEKRPILEYIEKGVVNIDKPKGPTSHEVAAWVKAILGVSTAGHAGSLDPKVTGLLPTLLGKATKAVPALRLSGKEYVCLLKLHKEMPQKLVRKVCEEFTGPIYQMPPIKSAVKRVIRIRTIYYLEVLEIEGSFVLFRVGCEAGTYIRKLCHDIGLALGCGGHMQELRRTKAGPFTEETLVTLQDLKDAYVLWKEDGDESEIRRVIMPMETAVSHLPKIILRDSAVDAICSGAALAVPGITSLDANLKKGELIALFTLKGELVALAKAEMSTEELLKASTGLAATSVRIMMEIGTYPKGWTKKEYGVES.

Residue Asp78 is the Nucleophile of the active site. A PUA domain is found at 245-320; that stretch reads LPKIILRDSA…LAATSVRIMM (76 aa).

This sequence belongs to the pseudouridine synthase TruB family. Type 2 subfamily.

It carries out the reaction uridine(55) in tRNA = pseudouridine(55) in tRNA. Its function is as follows. Could be responsible for synthesis of pseudouridine from uracil-55 in the psi GC loop of transfer RNAs. The chain is Probable tRNA pseudouridine synthase B from Methanosarcina barkeri (strain Fusaro / DSM 804).